The primary structure comprises 393 residues: Dual-specificity RNA methyltransferase RlmN (393 aa).

Glu115 (proton acceptor) is an active-site residue. One can recognise a Radical SAM core domain in the interval 121–365 (EEDRGTLCIS…APIRKTRGDD (245 aa)). The cysteines at positions 128 and 370 are disulfide-linked. The [4Fe-4S] cluster site is built by Cys135, Cys139, and Cys142. Residues 194-195 (GE), Ser226, 248-250 (SFH), and Asn327 each bind S-adenosyl-L-methionine. The active-site S-methylcysteine intermediate is Cys370.

The protein belongs to the radical SAM superfamily. RlmN family. The cofactor is [4Fe-4S] cluster.

It localises to the cytoplasm. The catalysed reaction is adenosine(2503) in 23S rRNA + 2 reduced [2Fe-2S]-[ferredoxin] + 2 S-adenosyl-L-methionine = 2-methyladenosine(2503) in 23S rRNA + 5'-deoxyadenosine + L-methionine + 2 oxidized [2Fe-2S]-[ferredoxin] + S-adenosyl-L-homocysteine. It carries out the reaction adenosine(37) in tRNA + 2 reduced [2Fe-2S]-[ferredoxin] + 2 S-adenosyl-L-methionine = 2-methyladenosine(37) in tRNA + 5'-deoxyadenosine + L-methionine + 2 oxidized [2Fe-2S]-[ferredoxin] + S-adenosyl-L-homocysteine. Specifically methylates position 2 of adenine 2503 in 23S rRNA and position 2 of adenine 37 in tRNAs. m2A2503 modification seems to play a crucial role in the proofreading step occurring at the peptidyl transferase center and thus would serve to optimize ribosomal fidelity. The chain is Dual-specificity RNA methyltransferase RlmN from Ruegeria pomeroyi (strain ATCC 700808 / DSM 15171 / DSS-3) (Silicibacter pomeroyi).